We begin with the raw amino-acid sequence, 1387 residues long: Regulator of G-protein signaling 12 (1387 aa).

Positions 21–97 (SVEVARGRAG…GVLRMVISEG (77 aa)) constitute a PDZ domain. A phosphoserine mark is found at serine 171 and serine 194. A Glycyl lysine isopeptide (Lys-Gly) (interchain with G-Cter in SUMO2) cross-link involves residue lysine 195. The region spanning 227–339 (VAMVVGYLGS…GALRTSCHVF (113 aa)) is the PID domain. Disordered stretches follow at residues 409–428 (ADAH…IGNF) and 442–488 (LGGG…PLET). A compositionally biased stretch (polar residues) spans 412–428 (HQNNSTSSNSDSGIGNF). 2 positions are modified to omega-N-methylarginine: arginine 524 and arginine 633. Residues 620 to 650 (RKTKEDKKSSKLGRGVALAQTSQRTSARRSF) form a disordered region. Residues serine 661 and serine 671 each carry the phosphoserine modification. The 118-residue stretch at 715–832 (SFERLLQDPV…LKSQLYQECV (118 aa)) folds into the RGS domain. Residues 842–934 (PDSQQVPSSP…ANGGLCRRES (93 aa)) form a disordered region. Residues 849–869 (SSPASKHSISSDHSNVSTPKK) show a composition bias toward low complexity. A phosphoserine mark is found at serine 850 and serine 879. Basic and acidic residues predominate over residues 914 to 923 (DHGDHAHDAL). Residue serine 943 is modified to Phosphoserine. 2 consecutive RBD domains span residues 962–1032 (KHCC…LGKR) and 1034–1104 (LFRL…LEER). A compositionally biased stretch (basic and acidic residues) spans 1103 to 1117 (ERDPSRGKVSTEKQK). The tract at residues 1103–1168 (ERDPSRGKVS…ARDPRLSKRE (66 aa)) is disordered. Residues 1122 to 1133 (KQSSAVNSSPRN) are compositionally biased toward polar residues. Residues 1151 to 1168 (IRGENGKSARDPRLSKRE) show a composition bias toward basic and acidic residues. Residues 1187–1209 (AEEFFELISKAQSNRADDQRGLL) form the GoLoco domain. 2 disordered regions span residues 1224-1325 (PGSS…EGTT) and 1349-1387 (ADLT…TSRF). Low complexity predominate over residues 1261–1280 (SDSPATSPASAQSPCSAYSP). Residues 1315-1325 (SCISTVQEGTT) show a composition bias toward polar residues. Residues 1367–1380 (LPPPPLPQDTPGPT) are compositionally biased toward pro residues.

Interacts with GNAI1, GNAI2 and GNAI3; the interactions are GDP-dependent. As to expression, detected in brain cortex GABAergic neurons, in striatum and substantia nigra, and in the Purkinje cell layer in the cerebellum and hippocampus (at protein level). Expressed at high levels in brain and lung and lower levels in testis, heart, and spleen.

The protein localises to the nucleus. It localises to the cytoplasm. It is found in the cell projection. Its subcellular location is the dendrite. The protein resides in the synapse. Its function is as follows. Regulates G protein-coupled receptor signaling cascades. Inhibits signal transduction by increasing the GTPase activity of G protein alpha subunits, thereby driving them into their inactive GDP-bound form. The polypeptide is Regulator of G-protein signaling 12 (Rgs12) (Rattus norvegicus (Rat)).